Consider the following 177-residue polypeptide: Large ribosomal subunit protein uL6 (177 aa).

Belongs to the universal ribosomal protein uL6 family. As to quaternary structure, part of the 50S ribosomal subunit.

Functionally, this protein binds to the 23S rRNA, and is important in its secondary structure. It is located near the subunit interface in the base of the L7/L12 stalk, and near the tRNA binding site of the peptidyltransferase center. The protein is Large ribosomal subunit protein uL6 of Shewanella frigidimarina (strain NCIMB 400).